We begin with the raw amino-acid sequence, 504 residues long: Cytochrome P450 71B7 (504 aa).

Residues 1 to 21 (MSILLCFLCLLPVFLVSLSIL) traverse the membrane as a helical segment. Lys82 participates in a covalent cross-link: Glycyl lysine isopeptide (Lys-Gly) (interchain with G-Cter in ubiquitin). Cys446 is a heme binding site.

Belongs to the cytochrome P450 family. It depends on heme as a cofactor. In terms of tissue distribution, highly expressed in rosette leaves. Also expressed in roots, leaves, flowers, and siliques.

The protein resides in the membrane. This chain is Cytochrome P450 71B7 (CYP71B7), found in Arabidopsis thaliana (Mouse-ear cress).